Reading from the N-terminus, the 301-residue chain is tRNA dimethylallyltransferase (301 aa).

8 to 15 serves as a coordination point for ATP; sequence GATGTGKS. Substrate is bound at residue 10–15; sequence TGTGKS. The interval 33-36 is interaction with substrate tRNA; that stretch reads DSMQ.

This sequence belongs to the IPP transferase family. As to quaternary structure, monomer. It depends on Mg(2+) as a cofactor.

The enzyme catalyses adenosine(37) in tRNA + dimethylallyl diphosphate = N(6)-dimethylallyladenosine(37) in tRNA + diphosphate. Its function is as follows. Catalyzes the transfer of a dimethylallyl group onto the adenine at position 37 in tRNAs that read codons beginning with uridine, leading to the formation of N6-(dimethylallyl)adenosine (i(6)A). This Tropheryma whipplei (strain Twist) (Whipple's bacillus) protein is tRNA dimethylallyltransferase.